A 294-amino-acid polypeptide reads, in one-letter code: ATP synthase gamma chain (294 aa).

The protein belongs to the ATPase gamma chain family. As to quaternary structure, F-type ATPases have 2 components, CF(1) - the catalytic core - and CF(0) - the membrane proton channel. CF(1) has five subunits: alpha(3), beta(3), gamma(1), delta(1), epsilon(1). CF(0) has three main subunits: a, b and c.

Its subcellular location is the cell inner membrane. In terms of biological role, produces ATP from ADP in the presence of a proton gradient across the membrane. The gamma chain is believed to be important in regulating ATPase activity and the flow of protons through the CF(0) complex. In Rhizobium etli (strain CIAT 652), this protein is ATP synthase gamma chain.